Consider the following 357-residue polypeptide: Probable 3'(2'),5'-bisphosphate nucleotidase 3 (357 aa).

Asp46 acts as the Proton acceptor in catalysis. 3 residues coordinate Mg(2+): Glu71, Asp135, and Ile137. Thr140 serves as the catalytic Proton acceptor. Adenosine 3',5'-bisphosphate contacts are provided by Thr140, Ser256, Lys259, and Arg273. Residues Ser256, Lys259, and Arg273 each coordinate AMP.

This sequence belongs to the inositol monophosphatase superfamily. The cofactor is Mg(2+).

It catalyses the reaction 3'-phosphoadenylyl sulfate + H2O = adenosine 5'-phosphosulfate + phosphate. The catalysed reaction is adenosine 3',5'-bisphosphate + H2O = AMP + phosphate. The enzyme catalyses adenosine 2',5'-bisphosphate + H2O = AMP + phosphate. It carries out the reaction 1D-myo-inositol 1,4-bisphosphate + H2O = 1D-myo-inositol 4-phosphate + phosphate. It catalyses the reaction 1D-myo-inositol 1,3,4-trisphosphate + H2O = 1D-myo-inositol 3,4-bisphosphate + phosphate. It functions in the pathway signal transduction; phosphatidylinositol signaling pathway. Its function is as follows. Phosphatase that converts adenosine 3'-phosphate 5'-phosphosulfate (PAPS) to adenosine 5'-phosphosulfate (APS) and 3'(2')-phosphoadenosine 5'-phosphate (PAP) to AMP. Is also able to hydrolyze inositol 1,4-bisphosphate and inositol 1,3,4-trisphosphate. In Arabidopsis thaliana (Mouse-ear cress), this protein is Probable 3'(2'),5'-bisphosphate nucleotidase 3 (SAL3).